A 94-amino-acid polypeptide reads, in one-letter code: Large ribosomal subunit protein eL42 (94 aa).

4 residues coordinate Zn(2+): C11, C14, C71, and C74. A C4-type zinc finger spans residues 11-74 (CPYCKRHTIH…LDLRFVCTVC (64 aa)).

It belongs to the eukaryotic ribosomal protein eL42 family. Part of the 50S ribosomal subunit. Requires Zn(2+) as cofactor.

Its function is as follows. Binds to the 23S rRNA. This is Large ribosomal subunit protein eL42 from Pyrococcus horikoshii (strain ATCC 700860 / DSM 12428 / JCM 9974 / NBRC 100139 / OT-3).